The primary structure comprises 473 residues: Bifunctional protein GlmU (473 aa).

The pyrophosphorylase stretch occupies residues 1–226; it reads MRAPVAVVIL…AGEASGINDL (226 aa). UDP-N-acetyl-alpha-D-glucosamine-binding positions include 10–13, lysine 24, glutamine 75, 80–81, 102–104, glycine 136, glutamate 151, asparagine 166, and asparagine 224; these read LAAG, GT, and YGD. Aspartate 104 contributes to the Mg(2+) binding site. Asparagine 224 provides a ligand contact to Mg(2+). Residues 227-247 are linker; the sequence is VQLAEVEEAFQRRWARRLLQG. An N-acetyltransferase region spans residues 248–473; it reads GLRLVAPHRF…TPASGGAKEE (226 aa). Residues arginine 330 and lysine 348 each contribute to the UDP-N-acetyl-alpha-D-glucosamine site. Catalysis depends on histidine 360, which acts as the Proton acceptor. UDP-N-acetyl-alpha-D-glucosamine is bound by residues tyrosine 363 and asparagine 374. Acetyl-CoA is bound by residues alanine 377, 383-384, serine 402, alanine 420, and arginine 437; that span reads NY. The interval 439–473 is disordered; sequence RARTIPGWQHPGLTGRRGPPDDNDATPASGGAKEE.

This sequence in the N-terminal section; belongs to the N-acetylglucosamine-1-phosphate uridyltransferase family. It in the C-terminal section; belongs to the transferase hexapeptide repeat family. In terms of assembly, homotrimer. Mg(2+) serves as cofactor.

It localises to the cytoplasm. It catalyses the reaction alpha-D-glucosamine 1-phosphate + acetyl-CoA = N-acetyl-alpha-D-glucosamine 1-phosphate + CoA + H(+). The enzyme catalyses N-acetyl-alpha-D-glucosamine 1-phosphate + UTP + H(+) = UDP-N-acetyl-alpha-D-glucosamine + diphosphate. The protein operates within nucleotide-sugar biosynthesis; UDP-N-acetyl-alpha-D-glucosamine biosynthesis; N-acetyl-alpha-D-glucosamine 1-phosphate from alpha-D-glucosamine 6-phosphate (route II): step 2/2. It participates in nucleotide-sugar biosynthesis; UDP-N-acetyl-alpha-D-glucosamine biosynthesis; UDP-N-acetyl-alpha-D-glucosamine from N-acetyl-alpha-D-glucosamine 1-phosphate: step 1/1. It functions in the pathway bacterial outer membrane biogenesis; LPS lipid A biosynthesis. Functionally, catalyzes the last two sequential reactions in the de novo biosynthetic pathway for UDP-N-acetylglucosamine (UDP-GlcNAc). The C-terminal domain catalyzes the transfer of acetyl group from acetyl coenzyme A to glucosamine-1-phosphate (GlcN-1-P) to produce N-acetylglucosamine-1-phosphate (GlcNAc-1-P), which is converted into UDP-GlcNAc by the transfer of uridine 5-monophosphate (from uridine 5-triphosphate), a reaction catalyzed by the N-terminal domain. The polypeptide is Bifunctional protein GlmU (Halorhodospira halophila (strain DSM 244 / SL1) (Ectothiorhodospira halophila (strain DSM 244 / SL1))).